A 175-amino-acid polypeptide reads, in one-letter code: Ribosome maturation factor RimM (175 aa).

The PRC barrel domain maps to 96–172; sequence PDTYYDHQLE…LIEIDPPDGL (77 aa).

This sequence belongs to the RimM family. In terms of assembly, binds ribosomal protein uS19.

It is found in the cytoplasm. Its function is as follows. An accessory protein needed during the final step in the assembly of 30S ribosomal subunit, possibly for assembly of the head region. Essential for efficient processing of 16S rRNA. May be needed both before and after RbfA during the maturation of 16S rRNA. It has affinity for free ribosomal 30S subunits but not for 70S ribosomes. The chain is Ribosome maturation factor RimM from Mycobacterium avium (strain 104).